A 65-amino-acid chain; its full sequence is NADH dehydrogenase [ubiquinone] 1 alpha subcomplex subunit 1 (65 aa).

A helical transmembrane segment spans residues 3 to 23; it reads LVWLEAMLPLGIIGGMLCIMG.

The protein belongs to the complex I NDUFA1 subunit family. In terms of assembly, complex I is composed of at least 49 different subunits.

Its subcellular location is the mitochondrion inner membrane. Its function is as follows. Accessory subunit of the mitochondrial membrane respiratory chain NADH dehydrogenase (Complex I), that is believed not to be involved in catalysis. Complex I functions in the transfer of electrons from NADH to the respiratory chain. The immediate electron acceptor for the enzyme is believed to be ubiquinone. The protein is NADH dehydrogenase [ubiquinone] 1 alpha subcomplex subunit 1 of Arabidopsis thaliana (Mouse-ear cress).